A 578-amino-acid polypeptide reads, in one-letter code: tRNA (guanine(26)-N(2))-dimethyltransferase (578 aa).

Positions 18 to 451 (NVIRERNAEI…APPAVLWDIL (434 aa)) constitute a Trm1 methyltransferase domain. Arg-43 serves as a coordination point for S-adenosyl-L-methionine. The segment at 63 to 92 (EKALKKQRKKVKEQEDEKTTPVPEDPPVYE) is disordered. Residues Arg-113 and Asp-131 each coordinate S-adenosyl-L-methionine. Cys-295, Cys-298, Cys-335, and Cys-338 together coordinate Zn(2+). Residues 491-578 (EANPKSRKSA…PKQPKLEATA (88 aa)) are disordered. Over residues 564–578 (DVEHLPKQPKLEATA) the composition is skewed to basic and acidic residues.

The protein belongs to the class I-like SAM-binding methyltransferase superfamily. Trm1 family.

It carries out the reaction guanosine(26) in tRNA + 2 S-adenosyl-L-methionine = N(2)-dimethylguanosine(26) in tRNA + 2 S-adenosyl-L-homocysteine + 2 H(+). In terms of biological role, dimethylates a single guanine residue at position 26 of most tRNAs using S-adenosyl-L-methionine as donor of the methyl groups. The sequence is that of tRNA (guanine(26)-N(2))-dimethyltransferase from Drosophila melanogaster (Fruit fly).